The sequence spans 194 residues: Isopentenyl-diphosphate Delta-isomerase (194 aa).

Mn(2+)-binding residues include H35 and H42. In terms of domain architecture, Nudix hydrolase spans 40–174 (PLHLAFSSYL…PWALSPWSVD (135 aa)). C77 is an active-site residue. H79 is a binding site for Mn(2+). Residue E97 participates in Mg(2+) binding. E124 and E126 together coordinate Mn(2+). Residue E126 is part of the active site.

This sequence belongs to the IPP isomerase type 1 family. It depends on Mg(2+) as a cofactor. Mn(2+) is required as a cofactor.

It localises to the cytoplasm. It carries out the reaction isopentenyl diphosphate = dimethylallyl diphosphate. The protein operates within isoprenoid biosynthesis; dimethylallyl diphosphate biosynthesis; dimethylallyl diphosphate from isopentenyl diphosphate: step 1/1. In terms of biological role, catalyzes the 1,3-allylic rearrangement of the homoallylic substrate isopentenyl (IPP) to its highly electrophilic allylic isomer, dimethylallyl diphosphate (DMAPP). The polypeptide is Isopentenyl-diphosphate Delta-isomerase (Frankia alni (strain DSM 45986 / CECT 9034 / ACN14a)).